The sequence spans 193 residues: ATP-dependent protease subunit HslV (193 aa).

Residue T12 is part of the active site. Residues A167, C170, and T173 each contribute to the Na(+) site.

Belongs to the peptidase T1B family. HslV subfamily. In terms of assembly, a double ring-shaped homohexamer of HslV is capped on each side by a ring-shaped HslU homohexamer. The assembly of the HslU/HslV complex is dependent on binding of ATP.

The protein resides in the cytoplasm. It carries out the reaction ATP-dependent cleavage of peptide bonds with broad specificity.. Allosterically activated by HslU binding. In terms of biological role, protease subunit of a proteasome-like degradation complex believed to be a general protein degrading machinery. In Bartonella henselae (strain ATCC 49882 / DSM 28221 / CCUG 30454 / Houston 1) (Rochalimaea henselae), this protein is ATP-dependent protease subunit HslV.